Here is a 152-residue protein sequence, read N- to C-terminus: MQMSEPLSQKNALYTAMNRFLGAVNNMDQTVMVPSLLRDVPLDQEKEQQKLTNDPGSYLREAEADMYSYYSQLKSIRNNIEWGVIRSEDQRRKKDTSASEPVRTEEESDMDLEQLLQFHLKGLHGVLSQLTSQANNLTNRYKQEIGISGWGQ.

A compositionally biased stretch (basic and acidic residues) spans 87 to 105 (SEDQRRKKDTSASEPVRTE). Residues 87–109 (SEDQRRKKDTSASEPVRTEEESD) are disordered.

The protein belongs to the SPOT14 family. Expressed for a short period in the cells that will produce the enveloping layer (EVL).

It is found in the nucleus. Its subcellular location is the cytoplasm. The protein localises to the cytoskeleton. Its function is as follows. Involved in stabilization of microtubules. May play a role in the regulation of lipogenesis. The polypeptide is Mid1-interacting protein 1A (mid1ip1a) (Danio rerio (Zebrafish)).